A 321-amino-acid polypeptide reads, in one-letter code: Cytochrome c biogenesis protein CcsA (321 aa).

Helical transmembrane passes span 17–37, 41–61, 68–88, 143–163, 227–247, 260–277, and 288–308; these read IISIVISVHLIKFLVPEIIGL, LEKGIITTSFCITGLLIIRWV, LSNLYESLMFLSWGFSTIHIF, MLLSYGALLCGSLLSVSLLVI, IINLGFTLLTIGILSGAVWAN, ETWAFITWTIFATYLHTR, and AIVASIGFLIIWICYFGVNLL.

This sequence belongs to the CcmF/CycK/Ccl1/NrfE/CcsA family. As to quaternary structure, may interact with Ccs1.

It is found in the plastid. The protein resides in the chloroplast thylakoid membrane. Functionally, required during biogenesis of c-type cytochromes (cytochrome c6 and cytochrome f) at the step of heme attachment. The sequence is that of Cytochrome c biogenesis protein CcsA from Piper cenocladum (Ant piper).